We begin with the raw amino-acid sequence, 790 residues long: Lon protease (790 aa).

The 198-residue stretch at 23 to 220 folds into the Lon N-terminal domain; it reads LPIMPIFHTV…EITLIVNHQL (198 aa). 372–379 contributes to the ATP binding site; sequence GPPGTGKT. Residues 608–789 form the Lon proteolytic domain; that stretch reads ISKPGIAMGL…REVLNIALSR (182 aa). Active-site residues include Ser-695 and Lys-738.

The protein belongs to the peptidase S16 family. In terms of assembly, homohexamer. Organized in a ring with a central cavity.

It is found in the cytoplasm. It carries out the reaction Hydrolysis of proteins in presence of ATP.. In terms of biological role, ATP-dependent serine protease that mediates the selective degradation of mutant and abnormal proteins as well as certain short-lived regulatory proteins. Required for cellular homeostasis and for survival from DNA damage and developmental changes induced by stress. Degrades polypeptides processively to yield small peptide fragments that are 5 to 10 amino acids long. Binds to DNA in a double-stranded, site-specific manner. This is Lon protease from Syntrophus aciditrophicus (strain SB).